The following is a 993-amino-acid chain: Nisin biosynthesis protein NisB (993 aa).

A helical transmembrane segment spans residues 838 to 851; it reads AIFCADSKIIPNLL.

It to B.subtilis SpaB and S.epidermidis EpiB.

It is found in the cell membrane. In terms of biological role, involved in the post-translational modification of the lantibiotic nisin. The sequence is that of Nisin biosynthesis protein NisB (nisB) from Lactococcus lactis subsp. lactis (Streptococcus lactis).